An 87-amino-acid polypeptide reads, in one-letter code: Beta-defensin 109C (87 aa).

Residues 1 to 22 (MRLHLLLLILLLFSILLSPVRG) form the signal peptide. 3 cysteine pairs are disulfide-bonded: Cys31/Cys59, Cys38/Cys53, and Cys43/Cys60.

Belongs to the beta-defensin family.

It is found in the secreted. Functionally, has antibacterial activity. This chain is Beta-defensin 109C (DEFB109C), found in Homo sapiens (Human).